Reading from the N-terminus, the 632-residue chain is Serine/threonine-protein kinase plk-2 (632 aa).

Positions 1 to 26 are disordered; the sequence is MQRVQPSAARVKSQKKEKAPPDVPDV. The Protein kinase domain maps to 36 to 287; sequence YEKGKFLGKG…ARAVCRDHFF (252 aa). Residues 42-50 and Lys65 each bind ATP; that span reads LGKGGFAHC. Catalysis depends on Asp159, which acts as the Proton acceptor. Residues 313–334 are disordered; that stretch reads AEENVSPSGTIDQRGPHQAGRS. POLO box domains lie at 405–484 and 506–588; these read WISK…YMND and TLRV…RLVE.

This sequence belongs to the protein kinase superfamily. Ser/Thr protein kinase family. CDC5/Polo subfamily. In terms of assembly, interacts (via POLO box domain) with mex-5 and mex-6. Interacts (via POLO box domain) with him-8 (via N-terminus); the interaction mediates plk-2 recruitment to the pairing region of X chromosomes during meiosis. Interacts with sun-1. May interact with nicotinic acetylcholine receptor. The cofactor is Mg(2+). Expressed in oocytes.

The protein localises to the nucleus. The protein resides in the cytoplasm. It localises to the cytoskeleton. Its subcellular location is the microtubule organizing center. It is found in the centrosome. The protein localises to the chromosome. The protein resides in the centromere. It localises to the kinetochore. The catalysed reaction is L-seryl-[protein] + ATP = O-phospho-L-seryl-[protein] + ADP + H(+). It carries out the reaction L-threonyl-[protein] + ATP = O-phospho-L-threonyl-[protein] + ADP + H(+). Its function is as follows. Serine/threonine-protein kinase which plays a role, during oogenesis, in chromosome pairing and synapsis, by facilitating the recruitment and attachment of meiotic chromosomes to the nuclear envelope during prophase. Promotes the localization of brc-1 to the short arm of homologous chromosomes during meiotic prophase I. Regulates the formation of sun-1 patches along the nuclear envelope. Promotes meiotic nuclei apoptosis in response to chromosomal asynapsis. Plays a redundant role with plk-1 in the establishment of cell polarity downstream of mex-5 and mex-6 during the first embryonic cell divisions. Plays a role in nicotinic acetylcholine receptor-mediated sensitivity to nicotine but not levamisole. Regulates motility. This chain is Serine/threonine-protein kinase plk-2, found in Caenorhabditis elegans.